Consider the following 263-residue polypeptide: Shikimate dehydrogenase (NADP(+)) (263 aa).

Shikimate-binding positions include 21-23 (TLS) and T67. The active-site Proton acceptor is K71. Residue E83 coordinates NADP(+). Shikimate-binding residues include N92 and D103. NADP(+)-binding positions include 126–130 (GAGGA) and L204. Residue Y206 participates in shikimate binding. G227 lines the NADP(+) pocket.

This sequence belongs to the shikimate dehydrogenase family. In terms of assembly, homodimer.

It catalyses the reaction shikimate + NADP(+) = 3-dehydroshikimate + NADPH + H(+). The protein operates within metabolic intermediate biosynthesis; chorismate biosynthesis; chorismate from D-erythrose 4-phosphate and phosphoenolpyruvate: step 4/7. Functionally, involved in the biosynthesis of the chorismate, which leads to the biosynthesis of aromatic amino acids. Catalyzes the reversible NADPH linked reduction of 3-dehydroshikimate (DHSA) to yield shikimate (SA). The chain is Shikimate dehydrogenase (NADP(+)) from Sulfolobus acidocaldarius (strain ATCC 33909 / DSM 639 / JCM 8929 / NBRC 15157 / NCIMB 11770).